We begin with the raw amino-acid sequence, 745 residues long: Probable endochitinase ARB_07371 (745 aa).

Residues 1–23 form the signal peptide; that stretch reads MALPKTIMAFIAFISFLVSTTFA. The region spanning 30–351 is the GH18 domain; it reads TNVVTYWGQG…SNIKRLLLNN (322 aa). The Proton donor role is filled by E178. 2 disordered regions span residues 351-372 and 395-446; these read NDPS…SMST and WSMP…TTEI. Over residues 357–372 the composition is skewed to low complexity; it reads TTTSKTMSSTKTSMST. 2 N-linked (GlcNAc...) asparagine glycosylation sites follow: N438 and N484. Positions 651–715 are disordered; the sequence is SEPMTPTQVP…EMGGNGGDRT (65 aa). The GPI-anchor amidated glycine moiety is linked to residue G720. Residues 721 to 745 constitute a propeptide, removed in mature form; sequence GAGVVSPSFSVVVIVLGSIVYHIMQ.

It belongs to the glycosyl hydrolase 18 family. Chitinase class III subfamily.

The protein localises to the cell membrane. The protein resides in the secreted. It is found in the cell wall. The catalysed reaction is Random endo-hydrolysis of N-acetyl-beta-D-glucosaminide (1-&gt;4)-beta-linkages in chitin and chitodextrins.. In terms of biological role, GPI-anchored chitinase involved in the degradation of chitin, a component of the cell walls of fungi and exoskeletal elements of some animals (including worms and arthropods). Required to reshape the cell wall at the sites where cell wall remodeling and/or cell wall maturation actively take place such as sites of conidia formation. The protein is Probable endochitinase ARB_07371 of Arthroderma benhamiae (strain ATCC MYA-4681 / CBS 112371) (Trichophyton mentagrophytes).